Consider the following 1018-residue polypeptide: MPRSSATARKNQSNRNENGASSGKKVAKQKSNGHLNGSLNGGSTPGSVSSSQVDLPSSRSTSDSAIAPAAAASSNLNGISDSSKEDCNGREKLNGYTKGNADMSYVQTNGAGSQNGGDHAGQASHRTDKSATGAKRSTSNASINPLQLASTILKSCPMYDTIAILIFLLQLPPMVLTLVQFLFASLTFMPPSGASAGSLSSNFDIFQGPAGTPSLSTMIAMDGFCLLIWALLMWTWAQNFALDLAHVQVAITLGGGGSGKNGGVNTLCVGIVLILHLIRSKGIQDFVIGHLLSSNIISPDLLAQYSHLLPTEFRRTESQTSPSWIRSLLAVHILAQAGTAMARRSMAKNRSPNPPRPGKRVDTEASAGSQTQIDSAFESGASVSSYLGPDGQLITPTAHKDGRDRLLSAKKRRRQANQVRSRQPFWAALASTKVTVMREYEHSRALSKTARGLPMTENDLQGVSFDDGLVWITDVDASTIKFAAGDFASADDSGLSGACEDGRLGNEEIEPFYVCVNGALWATATISRVPDAQKGSGMVHWRGEVSGLAPNCAYTCSFMRSDTDEEICAISVKTPVTNDTEQFSLVSPPPQPSYRPSSPTTTLKNSIVNAEAKLNEKRSRLRKAKNDHKLIISKIRKELDNYNHRLHSGTDENRQKQRSLQLERNIRQTEEATALLEGQLDSLENIPEEELREWSDQKAKYDQELQLLNSAKEELVSARSAVAREVSSLESDLGSTVQRRERLQSRRTRVNEQYERIVSANAQGLNERERRAAEQFAREQDQAKLEANFNEQFGSIGQSVQEYQLRAQQIWQQCDAIEQAIQQQQQRMLLDSAPLTPEGNLPGTNPFSETSALPLGALTSTAPNSRSLLGLSFPAIKSSPLQTISSALDASSSHPTSPVQPPSFLNFPASPLVNATSHLDSDFTYRDRSFSNRSARSSLYGSEFLDSSRRQPFQIDLPELLGEKRNSGSDSTALKSGLRPVSSPFQRAGSRGSGSGSNGSGGSGSGSGSPSSAYGKPN.

Residues 1–21 are compositionally biased toward polar residues; that stretch reads MPRSSATARKNQSNRNENGAS. Residues 1 to 138 form a disordered region; the sequence is MPRSSATARK…KSATGAKRST (138 aa). Positions 45 to 74 are enriched in low complexity; the sequence is PGSVSSSQVDLPSSRSTSDSAIAPAAAASS. Residues 82 to 93 show a composition bias toward basic and acidic residues; sequence SSKEDCNGREKL. 3 helical membrane passes run 162–182, 217–237, and 258–278; these read IAILIFLLQLPPMVLTLVQFL, TMIAMDGFCLLIWALLMWTWA, and SGKNGGVNTLCVGIVLILHLI. Disordered stretches follow at residues 342–371, 581–602, and 962–1018; these read ARRSMAKNRSPNPPRPGKRVDTEASAGSQT, EQFSLVSPPPQPSYRPSSPTTT, and GEKR…GKPN. Residues 601 to 788 are a coiled coil; the sequence is TTLKNSIVNA…EQDQAKLEAN (188 aa). Positions 991 to 1007 are enriched in gly residues; that stretch reads RGSGSGSNGSGGSGSGS.

Belongs to the acrB family.

It is found in the membrane. Component of the regulatory network controlling carbon source utilization through ubiquitination and deubiquitination involving creA, creB, creC, creD and acrB. Involved in resistance to acriflavine, and required for normal growth on a range of sole carbon sources, including fructose, cellobiose, raffinose, and starch, and reduced utilization of amino acids, including GABA and beta-alanine, as sole carbon and nitrogen sources. The chain is Probable ubiquitination network signaling protein acrB (acrB) from Aspergillus clavatus (strain ATCC 1007 / CBS 513.65 / DSM 816 / NCTC 3887 / NRRL 1 / QM 1276 / 107).